Reading from the N-terminus, the 421-residue chain is Gamma-glutamyl phosphate reductase (421 aa).

Belongs to the gamma-glutamyl phosphate reductase family.

Its subcellular location is the cytoplasm. It carries out the reaction L-glutamate 5-semialdehyde + phosphate + NADP(+) = L-glutamyl 5-phosphate + NADPH + H(+). It participates in amino-acid biosynthesis; L-proline biosynthesis; L-glutamate 5-semialdehyde from L-glutamate: step 2/2. Its function is as follows. Catalyzes the NADPH-dependent reduction of L-glutamate 5-phosphate into L-glutamate 5-semialdehyde and phosphate. The product spontaneously undergoes cyclization to form 1-pyrroline-5-carboxylate. The protein is Gamma-glutamyl phosphate reductase of Pseudomonas aeruginosa (strain LESB58).